The primary structure comprises 379 residues: Cytochrome b (379 aa).

4 helical membrane-spanning segments follow: residues phenylalanine 33–methionine 53, tryptophan 77–valine 98, tryptophan 113–leucine 133, and phenylalanine 178–leucine 198. The heme b site is built by histidine 83 and histidine 97. Residues histidine 182 and histidine 196 each contribute to the heme b site. Histidine 201 is an a ubiquinone binding site. 4 helical membrane-spanning segments follow: residues threonine 226–tyrosine 246, proline 288–glutamine 308, leucine 320–glycine 340, and phenylalanine 347–proline 367.

This sequence belongs to the cytochrome b family. The cytochrome bc1 complex contains 11 subunits: 3 respiratory subunits (MT-CYB, CYC1 and UQCRFS1), 2 core proteins (UQCRC1 and UQCRC2) and 6 low-molecular weight proteins (UQCRH/QCR6, UQCRB/QCR7, UQCRQ/QCR8, UQCR10/QCR9, UQCR11/QCR10 and a cleavage product of UQCRFS1). This cytochrome bc1 complex then forms a dimer. Requires heme b as cofactor.

Its subcellular location is the mitochondrion inner membrane. In terms of biological role, component of the ubiquinol-cytochrome c reductase complex (complex III or cytochrome b-c1 complex) that is part of the mitochondrial respiratory chain. The b-c1 complex mediates electron transfer from ubiquinol to cytochrome c. Contributes to the generation of a proton gradient across the mitochondrial membrane that is then used for ATP synthesis. The polypeptide is Cytochrome b (MT-CYB) (Lepilemur ruficaudatus (Red-tailed sportive lemur)).